We begin with the raw amino-acid sequence, 554 residues long: Macrophage colony-stimulating factor 1 (554 aa).

Residues 1 to 32 form the signal peptide; sequence MTAPGAAGRCPPTTWLGSLLLLVCLLASRSIT. Over 33-496 the chain is Lumenal; sequence EEVSEYCSHM…GSFSPQLQES (464 aa). 3 disulfides stabilise this stretch: Cys39–Cys122, Cys80–Cys171, and Cys134–Cys178. 2 N-linked (GlcNAc...) asparagine glycosylation sites follow: Asn154 and Asn172. Residues 224 to 488 are disordered; sequence EDSEGTEGSS…TGHERQSEGS (265 aa). At Thr266 the chain carries Phosphothreonine; by FAM20C. Ser309 carries O-linked (Xyl...) (chondroitin sulfate) serine glycosylation. Residues 344–354 show a composition bias toward low complexity; sequence LSASSPLPASA. O-linked (GalNAc...) threonine glycans are attached at residues Thr363 and Thr365. Residues 404–433 are compositionally biased toward polar residues; it reads RISSLRPQGLSNPSTLSAQPQLSRSHSSGS. The O-glycosylated at one site stretch occupies residues 406–426; that stretch reads SSLRPQGLSNPSTLSAQPQLS. The span at 440–453 shows a compositional bias: basic and acidic residues; sequence LEGRRSTRDRRSPA. Residues 497–517 form a helical membrane-spanning segment; that stretch reads VFHLLVPSVILVLLAVGGLLF. Over 518-554 the chain is Cytoplasmic; that stretch reads YRWRRRSHQEPQRADSPLEQPEGSPLTQDDRQVELPV. Positions 526-554 are disordered; it reads QEPQRADSPLEQPEGSPLTQDDRQVELPV. The segment covering 545–554 has biased composition (basic and acidic residues); it reads QDDRQVELPV.

As to quaternary structure, homodimer or heterodimer; disulfide-linked. Likely to exist in multiple forms: homodimer consisting of 2 identical 150-200 kDa proteoglycan subunits, heterodimer consisting of a 150-200 kDa proteoglycan subunit and a truncated 43 kDa subunit, and homodimer consisting of 2 identical 43 kDa subunits. Interacts with CSF1R. In terms of processing, N-glycosylated. O-glycosylated; contains chondroitin sulfate. O-glycosylated with core 1 or possibly core 8 glycans. Post-translationally, O-glycosylated.

The protein resides in the cell membrane. It localises to the secreted. The protein localises to the extracellular space. Its function is as follows. Cytokine that plays an essential role in the regulation of survival, proliferation and differentiation of hematopoietic precursor cells, especially mononuclear phagocytes, such as macrophages and monocytes. Promotes the release of pro-inflammatory chemokines, and thereby plays an important role in innate immunity and in inflammatory processes. Plays an important role in the regulation of osteoclast proliferation and differentiation, the regulation of bone resorption, and is required for normal bone development. Required for normal male and female fertility. Promotes reorganization of the actin cytoskeleton, regulates formation of membrane ruffles, cell adhesion and cell migration. Plays a role in lipoprotein clearance. The chain is Macrophage colony-stimulating factor 1 (CSF1) from Homo sapiens (Human).